A 200-amino-acid chain; its full sequence is Imidazoleglycerol-phosphate dehydratase (200 aa).

Belongs to the imidazoleglycerol-phosphate dehydratase family.

The protein localises to the cytoplasm. It carries out the reaction D-erythro-1-(imidazol-4-yl)glycerol 3-phosphate = 3-(imidazol-4-yl)-2-oxopropyl phosphate + H2O. The protein operates within amino-acid biosynthesis; L-histidine biosynthesis; L-histidine from 5-phospho-alpha-D-ribose 1-diphosphate: step 6/9. The chain is Imidazoleglycerol-phosphate dehydratase from Chlorobium luteolum (strain DSM 273 / BCRC 81028 / 2530) (Pelodictyon luteolum).